The sequence spans 207 residues: Putative 3-methyladenine DNA glycosylase (207 aa).

It belongs to the DNA glycosylase MPG family.

This Burkholderia cenocepacia (strain HI2424) protein is Putative 3-methyladenine DNA glycosylase.